Reading from the N-terminus, the 248-residue chain is Probable transcriptional regulatory protein FTW_1073 (248 aa).

The protein belongs to the TACO1 family.

Its subcellular location is the cytoplasm. The chain is Probable transcriptional regulatory protein FTW_1073 from Francisella tularensis subsp. tularensis (strain WY96-3418).